A 284-amino-acid chain; its full sequence is 2-dehydro-3-deoxyphosphooctonate aldolase (284 aa).

Belongs to the KdsA family.

The protein resides in the cytoplasm. It carries out the reaction D-arabinose 5-phosphate + phosphoenolpyruvate + H2O = 3-deoxy-alpha-D-manno-2-octulosonate-8-phosphate + phosphate. It participates in carbohydrate biosynthesis; 3-deoxy-D-manno-octulosonate biosynthesis; 3-deoxy-D-manno-octulosonate from D-ribulose 5-phosphate: step 2/3. It functions in the pathway bacterial outer membrane biogenesis; lipopolysaccharide biosynthesis. The chain is 2-dehydro-3-deoxyphosphooctonate aldolase from Mannheimia succiniciproducens (strain KCTC 0769BP / MBEL55E).